Consider the following 175-residue polypeptide: Large ribosomal subunit protein uL10 (175 aa).

Belongs to the universal ribosomal protein uL10 family. Part of the ribosomal stalk of the 50S ribosomal subunit. The N-terminus interacts with L11 and the large rRNA to form the base of the stalk. The C-terminus forms an elongated spine to which L12 dimers bind in a sequential fashion forming a multimeric L10(L12)X complex.

In terms of biological role, forms part of the ribosomal stalk, playing a central role in the interaction of the ribosome with GTP-bound translation factors. This is Large ribosomal subunit protein uL10 from Synechococcus elongatus (strain ATCC 33912 / PCC 7942 / FACHB-805) (Anacystis nidulans R2).